A 389-amino-acid chain; its full sequence is Probable protein phosphatase 2C 47 (389 aa).

The 271-residue stretch at 76-346 folds into the PPM-type phosphatase domain; sequence RSGSFADIGP…DNLTVIVVCF (271 aa). Mn(2+)-binding residues include Asp-120, Gly-121, Asp-294, and Asp-337.

It belongs to the PP2C family. Mg(2+) serves as cofactor. Mn(2+) is required as a cofactor.

The catalysed reaction is O-phospho-L-seryl-[protein] + H2O = L-seryl-[protein] + phosphate. It catalyses the reaction O-phospho-L-threonyl-[protein] + H2O = L-threonyl-[protein] + phosphate. This chain is Probable protein phosphatase 2C 47, found in Oryza sativa subsp. japonica (Rice).